The primary structure comprises 150 residues: Nucleoside diphosphate kinase (150 aa).

Residues Lys-9, Phe-57, Arg-85, Thr-91, Arg-102, and Asn-112 each contribute to the ATP site. His-115 acts as the Pros-phosphohistidine intermediate in catalysis.

The protein belongs to the NDK family. As to quaternary structure, homotetramer. Mg(2+) serves as cofactor.

The protein resides in the cytoplasm. It catalyses the reaction a 2'-deoxyribonucleoside 5'-diphosphate + ATP = a 2'-deoxyribonucleoside 5'-triphosphate + ADP. The enzyme catalyses a ribonucleoside 5'-diphosphate + ATP = a ribonucleoside 5'-triphosphate + ADP. In terms of biological role, major role in the synthesis of nucleoside triphosphates other than ATP. The ATP gamma phosphate is transferred to the NDP beta phosphate via a ping-pong mechanism, using a phosphorylated active-site intermediate. The polypeptide is Nucleoside diphosphate kinase (Thermosynechococcus vestitus (strain NIES-2133 / IAM M-273 / BP-1)).